The following is a 272-amino-acid chain: Homeobox protein Hox-D12 (272 aa).

Positions 204-263 form a DNA-binding region, homeobox; sequence SRRKRKPYTKQQIAELENEFLANEFINRQKRKELSDRLNLSDQQVKIWFQNRRMKKKRLV.

Belongs to the Abd-B homeobox family.

It localises to the nucleus. Its function is as follows. Sequence-specific transcription factor which is part of a developmental regulatory system that provides cells with specific positional identities on the anterior-posterior axis. This is Homeobox protein Hox-D12 (HOXD12) from Heterodontus francisci (Horn shark).